A 481-amino-acid chain; its full sequence is ATP synthase subunit beta (481 aa).

Position 154 to 161 (154 to 161 (GGAGVGKT)) interacts with ATP.

It belongs to the ATPase alpha/beta chains family. In terms of assembly, F-type ATPases have 2 components, CF(1) - the catalytic core - and CF(0) - the membrane proton channel. CF(1) has five subunits: alpha(3), beta(3), gamma(1), delta(1), epsilon(1). CF(0) has three main subunits: a(1), b(2) and c(9-12). The alpha and beta chains form an alternating ring which encloses part of the gamma chain. CF(1) is attached to CF(0) by a central stalk formed by the gamma and epsilon chains, while a peripheral stalk is formed by the delta and b chains.

It is found in the cell inner membrane. It carries out the reaction ATP + H2O + 4 H(+)(in) = ADP + phosphate + 5 H(+)(out). Functionally, produces ATP from ADP in the presence of a proton gradient across the membrane. The catalytic sites are hosted primarily by the beta subunits. In Novosphingobium aromaticivorans (strain ATCC 700278 / DSM 12444 / CCUG 56034 / CIP 105152 / NBRC 16084 / F199), this protein is ATP synthase subunit beta.